A 396-amino-acid chain; its full sequence is Probable peptidoglycan glycosyltransferase FtsW (396 aa).

The next 9 helical transmembrane spans lie at 17-37 (FCDG…WVMV), 61-81 (VFVL…MAWW), 83-103 (ANGP…LVAG), 117-137 (GIPL…VYLA), 159-179 (MVMA…AVVV), 198-218 (FLLL…AEPY), 274-294 (FVFA…VIGL), 316-336 (FAAY…FINI), and 350-370 (LPLL…VGML).

The protein belongs to the SEDS family. FtsW subfamily.

It localises to the cell inner membrane. The enzyme catalyses [GlcNAc-(1-&gt;4)-Mur2Ac(oyl-L-Ala-gamma-D-Glu-L-Lys-D-Ala-D-Ala)](n)-di-trans,octa-cis-undecaprenyl diphosphate + beta-D-GlcNAc-(1-&gt;4)-Mur2Ac(oyl-L-Ala-gamma-D-Glu-L-Lys-D-Ala-D-Ala)-di-trans,octa-cis-undecaprenyl diphosphate = [GlcNAc-(1-&gt;4)-Mur2Ac(oyl-L-Ala-gamma-D-Glu-L-Lys-D-Ala-D-Ala)](n+1)-di-trans,octa-cis-undecaprenyl diphosphate + di-trans,octa-cis-undecaprenyl diphosphate + H(+). It participates in cell wall biogenesis; peptidoglycan biosynthesis. Its function is as follows. Peptidoglycan polymerase that is essential for cell division. The sequence is that of Probable peptidoglycan glycosyltransferase FtsW from Halomonas elongata (strain ATCC 33173 / DSM 2581 / NBRC 15536 / NCIMB 2198 / 1H9).